A 167-amino-acid polypeptide reads, in one-letter code: Cytochrome c-type biogenesis protein CcmE (167 aa).

Topologically, residues 1-7 are cytoplasmic; the sequence is MTRKTRR. A helical; Signal-anchor for type II membrane protein membrane pass occupies residues 8 to 28; sequence LWIVIACLACVGSAAALTLRA. Topologically, residues 29–167 are periplasmic; sequence FSSNIVFFMA…DTMTAKKAGG (139 aa). 2 residues coordinate heme: H125 and Y129. The span at 141-150 shows a compositional bias: basic and acidic residues; it reads TGKWDPRFGK. Residues 141–167 form a disordered region; the sequence is TGKWDPRFGKAPDASSWDTMTAKKAGG.

Belongs to the CcmE/CycJ family.

It is found in the cell inner membrane. Heme chaperone required for the biogenesis of c-type cytochromes. Transiently binds heme delivered by CcmC and transfers the heme to apo-cytochromes in a process facilitated by CcmF and CcmH. The polypeptide is Cytochrome c-type biogenesis protein CcmE (Gluconobacter oxydans (strain 621H) (Gluconobacter suboxydans)).